A 392-amino-acid polypeptide reads, in one-letter code: Proteasomal ATPase-associated factor 1 (392 aa).

Residue Ala2 is modified to N-acetylalanine. WD repeat units follow at residues 82–121 (APYT…IWQA), 125–163 (ELRR…IWSA), 167–205 (SCVV…LWDC), 209–259 (ACLG…LARE), 270–308 (SRQL…QLDV), 313–349 (APVQ…IVQQ), and 353–389 (YVTE…RYQL).

It belongs to the WD repeat PAAF1/RPN14 family. As to quaternary structure, interacts with PSMC1, PSMC2, PSMC3, PSMC4, PSMC5 and PSMC6. Interacts with SUPT6H. (Microbial infection) Interacts with HIV-1 Tat. As to expression, ubiquitously expressed, with highest levels in kidney, brain and testis.

Inhibits proteasome 26S assembly and proteolytic activity by impairing the association of the 19S regulatory complex with the 20S core. In case of HIV-1 infection, recruited by viral Tat to the HIV-1 promoter, where it promotes the recruitment of 19S regulatory complex through dissociation of the proteasome 26S. This presumably promotes provirus transcription efficiency. Protects SUPT6H from proteasomal degradation. This chain is Proteasomal ATPase-associated factor 1 (PAAF1), found in Homo sapiens (Human).